Consider the following 493-residue polypeptide: Ribulose bisphosphate carboxylase large chain (493 aa).

Asparagine 132 and threonine 182 together coordinate substrate. The active-site Proton acceptor is the lysine 184. Residue lysine 186 participates in substrate binding. The Mg(2+) site is built by lysine 210, aspartate 212, and glutamate 213. Lysine 210 is subject to N6-carboxylysine. The active-site Proton acceptor is histidine 302. Residues arginine 303, histidine 335, and serine 387 each contribute to the substrate site.

Belongs to the RuBisCO large chain family. Type I subfamily. Heterohexadecamer of 8 large chains and 8 small chains. Mg(2+) serves as cofactor.

It catalyses the reaction 2 (2R)-3-phosphoglycerate + 2 H(+) = D-ribulose 1,5-bisphosphate + CO2 + H2O. It carries out the reaction D-ribulose 1,5-bisphosphate + O2 = 2-phosphoglycolate + (2R)-3-phosphoglycerate + 2 H(+). Functionally, ruBisCO catalyzes two reactions: the carboxylation of D-ribulose 1,5-bisphosphate, the primary event in carbon dioxide fixation, as well as the oxidative fragmentation of the pentose substrate. Both reactions occur simultaneously and in competition at the same active site. The polypeptide is Ribulose bisphosphate carboxylase large chain (Acidiphilium cryptum (strain JF-5)).